The primary structure comprises 152 residues: UPF0178 protein KPN78578_03210 (152 aa).

This sequence belongs to the UPF0178 family.

The sequence is that of UPF0178 protein KPN78578_03210 from Klebsiella pneumoniae subsp. pneumoniae (strain ATCC 700721 / MGH 78578).